Reading from the N-terminus, the 159-residue chain is Phosphopantetheine adenylyltransferase (159 aa).

Thr-9 contacts substrate. Residues 9–10 (TF) and His-17 each bind ATP. Residues Lys-41, Leu-73, and Arg-87 each coordinate substrate. Residues 88–90 (GLR), Glu-98, and 123–129 (YSFISST) contribute to the ATP site.

It belongs to the bacterial CoaD family. As to quaternary structure, homohexamer. The cofactor is Mg(2+).

The protein localises to the cytoplasm. It catalyses the reaction (R)-4'-phosphopantetheine + ATP + H(+) = 3'-dephospho-CoA + diphosphate. It participates in cofactor biosynthesis; coenzyme A biosynthesis; CoA from (R)-pantothenate: step 4/5. Functionally, reversibly transfers an adenylyl group from ATP to 4'-phosphopantetheine, yielding dephospho-CoA (dPCoA) and pyrophosphate. The sequence is that of Phosphopantetheine adenylyltransferase from Pseudomonas fluorescens (strain ATCC BAA-477 / NRRL B-23932 / Pf-5).